Consider the following 293-residue polypeptide: Heterogeneous nuclear ribonucleoprotein C-like 1 (293 aa).

Positions 16–87 (SRVFIGNLNT…QVVDINLAAE (72 aa)) constitute an RRM domain. 2 disordered regions span residues 137-177 (ALAV…KLKG) and 206-293 (KEQS…QDDS). Positions 177–225 (GDDLQAIKQELTQIKQKVDSLLENLEKIEKEQSKQEVEVKNAKSEEEQS) form a coiled coil. Composition is skewed to basic and acidic residues over residues 206-222 (KEQSKQEVEVKNAKSEE) and 229-240 (MKKDETHVKMES). Composition is skewed to acidic residues over residues 242–267 (GGAEDSAEEGDPLDDDVNEDQGDDQL) and 275–284 (KEAEEGEDDR).

It belongs to the RRM HNRPC family. RALY subfamily.

The protein localises to the nucleus. Functionally, may play a role in nucleosome assembly by neutralizing basic proteins such as A and B core hnRNPs. The sequence is that of Heterogeneous nuclear ribonucleoprotein C-like 1 (HNRNPCL1) from Homo sapiens (Human).